A 367-amino-acid chain; its full sequence is Trans-enoyl reductase opdC (367 aa).

Residues tyrosine 47 to lysine 50, serine 199 to asparagine 202, tyrosine 217, leucine 264 to aspartate 265, and isoleucine 353 to threonine 354 each bind NADP(+).

Belongs to the zinc-containing alcohol dehydrogenase family. Monomer.

It functions in the pathway secondary metabolite biosynthesis. Trans-enoyl reductase; part of the gene cluster that mediates the biosynthesis of oxopyrrolidines, polyketide-amino acid hybrid compounds with feature structures of tetramic acid. The polyketide chain is first assembled by the highly reducing PKS module of opdA using acetyl-CoA as the starter unit and five malonyl-CoA as the extender units. OpdC acts as a trans-acting enoyl reductase and reduces the terminal alkenyl to alkane. The 17R in oxopyrrolidine A and 15R, 17S in oxopyrrolidine B are generated by non-stereospecific catalysis of the ketoreductase (KR) domain and enoyl reductases. Then the polyketides with specific configurations are transferred to the NRPS module of opdA and linked to L-tyrosine to form an amide bond. Finally, the oxopyrrolidines are offloaded through a Dieckmann cyclization catalyzed by the terminal D domain to give a tetramic acid moiety. This is Trans-enoyl reductase opdC from Penicillium oxalicum (strain 114-2 / CGMCC 5302) (Penicillium decumbens).